Consider the following 507-residue polypeptide: Transcription factor SOX-9 (507 aa).

Disordered regions lie at residues 1-67 and 160-250; these read MNLL…SEED and RLRV…AGKV. Positions 30-41 are enriched in low complexity; it reads SAGSPCPSGSGS. The segment covering 42–52 has biased composition (polar residues); sequence DTENTRPQENT. Basic and acidic residues-rich tracts occupy residues 56–67 and 160–174; these read GEPDLKKESEED and RLRV…DYKY. The segment at 63 to 103 is dimerization (DIM); sequence ESEEDKFPVCIREAVSQVLKGYDWTLVPMPVRVNGSSKNKP. The interval 63–103 is PQA; that stretch reads ESEEDKFPVCIREAVSQVLKGYDWTLVPMPVRVNGSSKNKP. Phosphoserine; by PKA is present on S64. The segment at residues 105–173 is a DNA-binding region (HMG box); that stretch reads VKRPMNAFMV…QHKKDHPDYK (69 aa). Phosphoserine; by PKA is present on S211. Positions 224–307 are transactivation domain (TAM); it reads PGEHSGQSQG…LPPNGHPGVP (84 aa). 2 consecutive short sequence motifs (9aaTAD) follow at residues 275 to 284 and 290 to 298; these read IGELSSDVIS and DVNEFDQYL. The disordered stretch occupies residues 335 to 429; that stretch reads WMSKQQAPPP…PFNLPHYSPS (95 aa). Over residues 341–369 the composition is skewed to pro residues; the sequence is APPPPPQQPPQAPQAPQAPPQQQAPPQQP. Residues 378-420 are compositionally biased toward polar residues; it reads HTLTTLSSEPGQSQRTHIKTEQLSPSHYSEQQQHSPQQISYSP. Residues 392–507 are transactivation domain (TAC); sequence RTHIKTEQLS…QPVYTQLTRP (116 aa). K396 is covalently cross-linked (Glycyl lysine isopeptide (Lys-Gly) (interchain with G-Cter in ubiquitin)). The short motif at 458–466 is the 9aaTAD 3 element; the sequence is SGLYSTFTY. Residues 477–507 form a disordered region; that stretch reads PIADTSGVPSIPQTHSPQHWEQPVYTQLTRP. Polar residues predominate over residues 483–507; it reads GVPSIPQTHSPQHWEQPVYTQLTRP.

Homodimer; homodimerization is required for activity. Interacts (via C-terminus) with ZNF219; forming a complex that binds to the COL2A1 promoter and activates COL2A1 expression. Interacts with DDRGK1. Interacts with EP300/p300. Interacts with beta-catenin (CTNNB1); inhibiting CTNNB1 activity by competing with the binding sites of TCF/LEF within CTNNB1. Acetylated; acetylation impairs nuclear localization and ability to transactivate expression of target genes. Deacetylated by SIRT1. Post-translationally, phosphorylation at Ser-64 and Ser-211 by PKA increases transcriptional activity and may help delay chondrocyte maturation downstream of PTHLH/PTHrP signaling. Phosphorylation at either Ser-64 or Ser-211 is required for sumoylation, but phosphorylation is not dependent on sumoylation. Phosphorylated on tyrosine residues; tyrosine dephosphorylation by PTPN11/SHP2 blocks SOX9 phosphorylation by PKA and subsequent SUMOylation. In terms of processing, sumoylated; phosphorylation at either Ser-64 or Ser-211 is required for sumoylation. Sumoylation is induced by BMP signaling pathway. Ubiquitinated; ubiquitination leads to proteasomal degradation and is negatively regulated by DDRGK1. As to expression, expressed in the intestinal epithelium (at protein level). Expressed in progenitor cells in various organs, including chondroprogenitors, osteoprogenitors and preadipocytes, but is not expressed in most differentiated cell types such as osteoblasts and adipocytes, with the exception of chondrocytes. Highly expressed in developing chondrogenic tissues. Also expressed in some non-chondrogenic tissues such as notochord, otic vesicle and neural tube.

Its subcellular location is the nucleus. In terms of biological role, transcription factor that plays a key role in chondrocytes differentiation and skeletal development. Specifically binds the 5'-ACAAAG-3' DNA motif present in enhancers and super-enhancers and promotes expression of genes important for chondrogenesis, including cartilage matrix protein-coding genes COL2A1, COL4A2, COL9A1, COL11A2 and ACAN, SOX5 and SOX6. Also binds to some promoter regions. Plays a central role in successive steps of chondrocyte differentiation. Absolutely required for precartilaginous condensation, the first step in chondrogenesis during which skeletal progenitors differentiate into prechondrocytes. Together with SOX5 and SOX6, required for overt chondrogenesis when condensed prechondrocytes differentiate into early stage chondrocytes, the second step in chondrogenesis. Later, required to direct hypertrophic maturation and block osteoblast differentiation of growth plate chondrocytes: maintains chondrocyte columnar proliferation, delays prehypertrophy and then prevents osteoblastic differentiation of chondrocytes by lowering beta-catenin (CTNNB1) signaling and RUNX2 expression. Also required for chondrocyte hypertrophy, both indirectly, by keeping the lineage fate of chondrocytes, and directly, by remaining present in upper hypertrophic cells and transactivating COL10A1 along with MEF2C. Low lipid levels are the main nutritional determinant for chondrogenic commitment of skeletal progenitor cells: when lipids levels are low, FOXO (FOXO1 and FOXO3) transcription factors promote expression of SOX9, which induces chondrogenic commitment and suppresses fatty acid oxidation. Mechanistically, helps, but is not required, to remove epigenetic signatures of transcriptional repression and deposit active promoter and enhancer marks at chondrocyte-specific genes. Acts in cooperation with the Hedgehog pathway-dependent GLI (GLI1 and GLI3) transcription factors. In addition to cartilage development, also acts as a regulator of proliferation and differentiation in epithelial stem/progenitor cells: involved in the lung epithelium during branching morphogenesis, by balancing proliferation and differentiation and regulating the extracellular matrix. Controls epithelial branching during kidney development. This is Transcription factor SOX-9 from Mus musculus (Mouse).